The following is a 443-amino-acid chain: Pentatricopeptide repeat-containing protein 6, mitochondrial (443 aa).

Residues 1 to 13 constitute a mitochondrion transit peptide; the sequence is MRILGSLPNNIRK. PPR repeat units lie at residues 130-164 and 220-254; these read NIVD…RIRP and NSTT…NENS.

It is found in the mitochondrion. Functionally, mitochondrial RNA-binding protein required for the stability of the atp9 mRNA. The chain is Pentatricopeptide repeat-containing protein 6, mitochondrial (ppr6) from Schizosaccharomyces pombe (strain 972 / ATCC 24843) (Fission yeast).